A 426-amino-acid polypeptide reads, in one-letter code: Dihydrofolate synthase/folylpolyglutamate synthase (426 aa).

58-61 (GKGS) provides a ligand contact to ATP. Serine 82 serves as a coordination point for Mg(2+). Residue 121–124 (TRFE) participates in 7,8-dihydropteroate binding. Mg(2+) is bound at residue glutamate 145. 152-154 (LDA) contributes to the 7,8-dihydropteroate binding site. Histidine 172 provides a ligand contact to Mg(2+). 2 residues coordinate ATP: arginine 289 and aspartate 302.

It belongs to the folylpolyglutamate synthase family. In terms of assembly, monomer. The cofactor is Mg(2+).

The catalysed reaction is 7,8-dihydropteroate + L-glutamate + ATP = 7,8-dihydrofolate + ADP + phosphate + H(+). It carries out the reaction (6S)-5,6,7,8-tetrahydrofolyl-(gamma-L-Glu)(n) + L-glutamate + ATP = (6S)-5,6,7,8-tetrahydrofolyl-(gamma-L-Glu)(n+1) + ADP + phosphate + H(+). The enzyme catalyses 10-formyltetrahydrofolyl-(gamma-L-Glu)(n) + L-glutamate + ATP = 10-formyltetrahydrofolyl-(gamma-L-Glu)(n+1) + ADP + phosphate + H(+). It catalyses the reaction (6R)-5,10-methylenetetrahydrofolyl-(gamma-L-Glu)(n) + L-glutamate + ATP = (6R)-5,10-methylenetetrahydrofolyl-(gamma-L-Glu)(n+1) + ADP + phosphate + H(+). Its pathway is cofactor biosynthesis; tetrahydrofolate biosynthesis; 7,8-dihydrofolate from 2-amino-4-hydroxy-6-hydroxymethyl-7,8-dihydropteridine diphosphate and 4-aminobenzoate: step 2/2. The protein operates within cofactor biosynthesis; tetrahydrofolylpolyglutamate biosynthesis. Functionally, functions in two distinct reactions of the de novo folate biosynthetic pathway. Catalyzes the addition of a glutamate residue to dihydropteroate (7,8-dihydropteroate or H2Pte) to form dihydrofolate (7,8-dihydrofolate monoglutamate or H2Pte-Glu). Also catalyzes successive additions of L-glutamate to tetrahydrofolate or 10-formyltetrahydrofolate or 5,10-methylenetetrahydrofolate, leading to folylpolyglutamate derivatives. The protein is Dihydrofolate synthase/folylpolyglutamate synthase (folC) of Buchnera aphidicola subsp. Baizongia pistaciae (strain Bp).